The sequence spans 239 residues: Dihydromethanopterin reductase (acceptor) (239 aa).

4Fe-4S ferredoxin-type domains are found at residues 144–175 (MPYNIDRKQCKHCETCPPRENCPHEAISEKNG) and 176–205 (VTDQIDLLKCKGCGICKELCPYNAIKGGPV). [4Fe-4S] cluster-binding residues include Cys-153, Cys-156, Cys-159, Cys-165, Cys-185, Cys-188, Cys-191, and Cys-195.

As to quaternary structure, homodimer. [4Fe-4S] cluster serves as cofactor.

It catalyses the reaction 5,6,7,8-tetrahydromethanopterin + A = 7,8-dihydromethanopterin + AH2. It participates in cofactor biosynthesis; 5,6,7,8-tetrahydromethanopterin biosynthesis. Involved in the biosynthesis of tetrahydromethanopterin, a coenzyme used in methanogenesis. Catalyzes the reduction of dihydromethanopterin (H(2)MPT) to tetrahydromethanopterin (H(4)MPT). Ferredoxin may serve as an electron donor. The protein is Dihydromethanopterin reductase (acceptor) of Methanosarcina mazei (strain ATCC BAA-159 / DSM 3647 / Goe1 / Go1 / JCM 11833 / OCM 88) (Methanosarcina frisia).